The primary structure comprises 504 residues: Cytochrome P450 3A1 (504 aa).

Heme is bound at residue Cys-443.

The protein belongs to the cytochrome P450 family. Heme is required as a cofactor.

The protein localises to the endoplasmic reticulum membrane. The protein resides in the microsome membrane. The enzyme catalyses an organic molecule + reduced [NADPH--hemoprotein reductase] + O2 = an alcohol + oxidized [NADPH--hemoprotein reductase] + H2O + H(+). Cytochromes P450 are a group of heme-thiolate monooxygenases. In liver microsomes, this enzyme is involved in an NADPH-dependent electron transport pathway. It oxidizes a variety of structurally unrelated compounds, including steroids, fatty acids, and xenobiotics. The polypeptide is Cytochrome P450 3A1 (Cyp3a1) (Rattus norvegicus (Rat)).